We begin with the raw amino-acid sequence, 391 residues long: Ferrochelatase (391 aa).

2 residues coordinate Fe cation: H196 and E281.

It belongs to the ferrochelatase family.

It is found in the cytoplasm. The catalysed reaction is heme b + 2 H(+) = protoporphyrin IX + Fe(2+). The protein operates within porphyrin-containing compound metabolism; protoheme biosynthesis; protoheme from protoporphyrin-IX: step 1/1. Functionally, catalyzes the ferrous insertion into protoporphyrin IX. The polypeptide is Ferrochelatase (Prochlorococcus marinus (strain AS9601)).